Here is an 808-residue protein sequence, read N- to C-terminus: Probable ATP-dependent helicase MJ1401 (808 aa).

Residues 189-217 (YKIDELDIPEELKEIIKSRGIEELLPVQT) carry the Q motif motif. Residues 221 to 391 (KAGLLNGDDL…QLNAKLVLYN (171 aa)) form the Helicase ATP-binding domain. Position 234–241 (234–241 (SATSSGKT)) interacts with ATP. A DEIH box motif is present at residues 336–339 (DEIH). The Helicase C-terminal domain occupies 396–585 (PLERHIIFCK…EDEEEEQILA (190 aa)).

It belongs to the DEAD box helicase family.

This chain is Probable ATP-dependent helicase MJ1401, found in Methanocaldococcus jannaschii (strain ATCC 43067 / DSM 2661 / JAL-1 / JCM 10045 / NBRC 100440) (Methanococcus jannaschii).